The chain runs to 592 residues: Glutathione-regulated potassium-efflux system protein KefB (592 aa).

The next 13 helical transmembrane spans lie at 4–24 (SDFL…VPLA), 29–49 (IGAV…GLGF), 55–75 (EILH…GLEL), 87–107 (IFGV…GLLM), 115–135 (AAVV…LQLM), 152–172 (VLLF…LLAG), 177–197 (HFDW…LIGG), 207–227 (FIAA…LVLG), 230–250 (LFMD…GVLL), 268–288 (GLLL…GVLY), 291–311 (LLWV…VLYL), 324–344 (MQFA…FSTA), and 356–376 (ALLL…MKLV). The RCK N-terminal domain maps to 400–519 (KPQVIVVGFG…AGVTQFSRET (120 aa)).

Belongs to the monovalent cation:proton antiporter 2 (CPA2) transporter (TC 2.A.37) family. KefB subfamily. In terms of assembly, interacts with the regulatory subunit KefG.

The protein localises to the cell inner membrane. In terms of biological role, pore-forming subunit of a potassium efflux system that confers protection against electrophiles. Catalyzes K(+)/H(+) antiport. In Escherichia coli O157:H7, this protein is Glutathione-regulated potassium-efflux system protein KefB.